The primary structure comprises 228 residues: Protein ARV 2 (228 aa).

A run of 2 helical transmembrane segments spans residues 37–57 (EVAD…LILH) and 80–100 (LLWK…LLLR). An N-linked (GlcNAc...) asparagine glycan is attached at N107. The next 3 membrane-spanning stretches (helical) occupy residues 123 to 143 (VLSA…LMLV), 150 to 170 (ILLT…MPVW), and 176 to 196 (VIFI…KVMT).

This sequence belongs to the ARV1 family. As to expression, restricted to tissues in which cells are actively dividing or expanding. Mostly expressed in roots and flowers, and, to a lower extent, in stems and leaves.

Its subcellular location is the endoplasmic reticulum membrane. Mediator of sterol homeostasis involved in sterol uptake, trafficking and distribution into membranes. Also regulates the sphingolipid metabolism. In Arabidopsis thaliana (Mouse-ear cress), this protein is Protein ARV 2.